The sequence spans 807 residues: Phenylalanine--tRNA ligase beta subunit (807 aa).

The 115-residue stretch at 39-153 (SARAQGVVVG…SLPPNGSPVA (115 aa)) folds into the tRNA-binding domain. In terms of domain architecture, B5 spans 407 to 491 (AEAGPVLLRR…RLVGFDRFGA (85 aa)). The Mg(2+) site is built by Asp-469, Asp-475, Glu-478, and Glu-479. Residues 713–806 (PTVPFSERDL…LSKQFQAELR (94 aa)) enclose the FDX-ACB domain.

The protein belongs to the phenylalanyl-tRNA synthetase beta subunit family. Type 1 subfamily. Tetramer of two alpha and two beta subunits. It depends on Mg(2+) as a cofactor.

It localises to the cytoplasm. It catalyses the reaction tRNA(Phe) + L-phenylalanine + ATP = L-phenylalanyl-tRNA(Phe) + AMP + diphosphate + H(+). This Synechococcus sp. (strain CC9605) protein is Phenylalanine--tRNA ligase beta subunit.